A 63-amino-acid polypeptide reads, in one-letter code: Cytochrome c oxidase subunit 7C, mitochondrial (63 aa).

A mitochondrion-targeting transit peptide spans 1 to 16; sequence MLGQSIRRFTTSVVRR. Residues 17–33 are Mitochondrial matrix-facing; the sequence is SHYEEGPGKNLPFSVEN. The residue at position 25 (lysine 25) is an N6-acetyllysine; alternate. Lysine 25 carries the post-translational modification N6-succinyllysine; alternate. The helical transmembrane segment at 34–60 threads the bilayer; it reads KWSLLAKMCLYFGSAFATPFLVVRHQL. The Mitochondrial intermembrane segment spans residues 61 to 63; the sequence is LKT.

It belongs to the cytochrome c oxidase VIIc family. In terms of assembly, component of the cytochrome c oxidase (complex IV, CIV), a multisubunit enzyme composed of 14 subunits. The complex is composed of a catalytic core of 3 subunits MT-CO1, MT-CO2 and MT-CO3, encoded in the mitochondrial DNA, and 11 supernumerary subunits COX4I1 (or COX4I2), COX5A, COX5B, COX6A1 (or COX6A2), COX6B1 (or COX6B2), COX6C, COX7A2 (or COX7A1), COX7B, COX7C, COX8A and NDUFA4, which are encoded in the nuclear genome. The complex exists as a monomer or a dimer and forms supercomplexes (SCs) in the inner mitochondrial membrane with NADH-ubiquinone oxidoreductase (complex I, CI) and ubiquinol-cytochrome c oxidoreductase (cytochrome b-c1 complex, complex III, CIII), resulting in different assemblies (supercomplex SCI(1)III(2)IV(1) and megacomplex MCI(2)III(2)IV(2)). Interacts with RAB5IF.

It localises to the mitochondrion inner membrane. Its pathway is energy metabolism; oxidative phosphorylation. Functionally, component of the cytochrome c oxidase, the last enzyme in the mitochondrial electron transport chain which drives oxidative phosphorylation. The respiratory chain contains 3 multisubunit complexes succinate dehydrogenase (complex II, CII), ubiquinol-cytochrome c oxidoreductase (cytochrome b-c1 complex, complex III, CIII) and cytochrome c oxidase (complex IV, CIV), that cooperate to transfer electrons derived from NADH and succinate to molecular oxygen, creating an electrochemical gradient over the inner membrane that drives transmembrane transport and the ATP synthase. Cytochrome c oxidase is the component of the respiratory chain that catalyzes the reduction of oxygen to water. Electrons originating from reduced cytochrome c in the intermembrane space (IMS) are transferred via the dinuclear copper A center (CU(A)) of subunit 2 and heme A of subunit 1 to the active site in subunit 1, a binuclear center (BNC) formed by heme A3 and copper B (CU(B)). The BNC reduces molecular oxygen to 2 water molecules using 4 electrons from cytochrome c in the IMS and 4 protons from the mitochondrial matrix. This Homo sapiens (Human) protein is Cytochrome c oxidase subunit 7C, mitochondrial (COX7C).